The primary structure comprises 44 residues: Cytochrome b559 subunit beta (44 aa).

The helical transmembrane segment at 19–35 (WLAIHGIAVPTIFFLGA) threads the bilayer. His-23 contributes to the heme binding site.

The protein belongs to the PsbE/PsbF family. In terms of assembly, heterodimer of an alpha subunit and a beta subunit. PSII is composed of 1 copy each of membrane proteins PsbA, PsbB, PsbC, PsbD, PsbE, PsbF, PsbH, PsbI, PsbJ, PsbK, PsbL, PsbM, PsbT, PsbX, PsbY, PsbZ, Psb30/Ycf12, at least 3 peripheral proteins of the oxygen-evolving complex and a large number of cofactors. It forms dimeric complexes. It depends on heme b as a cofactor.

It localises to the plastid. Its subcellular location is the chloroplast thylakoid membrane. In terms of biological role, this b-type cytochrome is tightly associated with the reaction center of photosystem II (PSII). PSII is a light-driven water:plastoquinone oxidoreductase that uses light energy to abstract electrons from H(2)O, generating O(2) and a proton gradient subsequently used for ATP formation. It consists of a core antenna complex that captures photons, and an electron transfer chain that converts photonic excitation into a charge separation. This is Cytochrome b559 subunit beta from Chlamydomonas reinhardtii (Chlamydomonas smithii).